We begin with the raw amino-acid sequence, 332 residues long: MRYAVFIFLIVLIDLIYCWNSKRSFFIPDFLGSGDGTPKSKTESVIEERMEYGRMILLVCNKTCAKHRSDIPLWLKEFNQKKGYQEPETITYYYHTYRQAVSFIDTNETDVFPNLIYFIGVKRVVFNGDVNIREDVNDWIASLDQLILLEPRVYEDLNVILSDTSNCSSKYLLLADRPKCPQPSWSIVARIAQDHGIQPVKIGHPLDGLTHVLLYKRMPYLSEASCHLSVLLYENSYSDFGDDINPLVVSDWITTLLPLEEGSCPALFETYWHPIVDELTELQQIFYSAELEISERNKRPAFVLVGLTGGIAVIILAFSIFWGLNGSGFNKD.

The N-terminal stretch at 1-18 is a signal peptide; sequence MRYAVFIFLIVLIDLIYC. Over 19-301 the chain is Extracellular; that stretch reads WNSKRSFFIP…EISERNKRPA (283 aa). N-linked (GlcNAc...) asparagine glycans are attached at residues asparagine 61, asparagine 107, and asparagine 166. A helical transmembrane segment spans residues 302–322; sequence FVLVGLTGGIAVIILAFSIFW. At 323 to 332 the chain is on the cytoplasmic side; that stretch reads GLNGSGFNKD.

In terms of assembly, may form a complex with sup-9 and unc-93 where sup-10 and unc-93 act as regulatory subunits of the two pore potassium channel sup-9. Sup-10 may regulate sup-9 via sup-18. As to expression, low levels in body-wall muscles, eight vulval muscles, intestinal muscles and anal depressor muscle.

The protein resides in the membrane. Its function is as follows. May contribute to coordination of muscle contraction as regulatory subunit of a nonessential potassium channel complex. The polypeptide is Putative potassium channel regulatory protein sup-10 (Caenorhabditis elegans).